A 430-amino-acid chain; its full sequence is UDP-N-acetylmuramoylalanine--D-glutamate ligase (430 aa).

Position 109–115 (109–115 (GTDGKST)) interacts with ATP.

It belongs to the MurCDEF family.

It is found in the cytoplasm. The catalysed reaction is UDP-N-acetyl-alpha-D-muramoyl-L-alanine + D-glutamate + ATP = UDP-N-acetyl-alpha-D-muramoyl-L-alanyl-D-glutamate + ADP + phosphate + H(+). It participates in cell wall biogenesis; peptidoglycan biosynthesis. Cell wall formation. Catalyzes the addition of glutamate to the nucleotide precursor UDP-N-acetylmuramoyl-L-alanine (UMA). The chain is UDP-N-acetylmuramoylalanine--D-glutamate ligase from Thermotoga petrophila (strain ATCC BAA-488 / DSM 13995 / JCM 10881 / RKU-1).